Reading from the N-terminus, the 329-residue chain is Ketol-acid reductoisomerase (NADP(+)) (329 aa).

Residues 2-182 (TQLFYDTDAD…GGTRAGILET (181 aa)) enclose the KARI N-terminal Rossmann domain. Residues 25–28 (YGSQ), serine 51, serine 53, and 83–86 (DEFQ) each bind NADP(+). Residue histidine 108 is part of the active site. Position 134 (glycine 134) interacts with NADP(+). The region spanning 183–328 (NFKEETETDL…KGLRSMFSWL (146 aa)) is the KARI C-terminal knotted domain. Positions 191, 195, 227, and 231 each coordinate Mg(2+). Serine 252 lines the substrate pocket.

This sequence belongs to the ketol-acid reductoisomerase family. Mg(2+) serves as cofactor.

It catalyses the reaction (2R)-2,3-dihydroxy-3-methylbutanoate + NADP(+) = (2S)-2-acetolactate + NADPH + H(+). The enzyme catalyses (2R,3R)-2,3-dihydroxy-3-methylpentanoate + NADP(+) = (S)-2-ethyl-2-hydroxy-3-oxobutanoate + NADPH + H(+). The protein operates within amino-acid biosynthesis; L-isoleucine biosynthesis; L-isoleucine from 2-oxobutanoate: step 2/4. It functions in the pathway amino-acid biosynthesis; L-valine biosynthesis; L-valine from pyruvate: step 2/4. In terms of biological role, involved in the biosynthesis of branched-chain amino acids (BCAA). Catalyzes an alkyl-migration followed by a ketol-acid reduction of (S)-2-acetolactate (S2AL) to yield (R)-2,3-dihydroxy-isovalerate. In the isomerase reaction, S2AL is rearranged via a Mg-dependent methyl migration to produce 3-hydroxy-3-methyl-2-ketobutyrate (HMKB). In the reductase reaction, this 2-ketoacid undergoes a metal-dependent reduction by NADPH to yield (R)-2,3-dihydroxy-isovalerate. The chain is Ketol-acid reductoisomerase (NADP(+)) from Prochlorococcus marinus (strain MIT 9312).